The sequence spans 1095 residues: Collagen, type I, alpha 1a (1095 aa).

Positions 1–21 are enriched in pro residues; sequence SPAMPVPGPMGPMGPRGPPGS. The tract at residues 1-1011 is disordered; it reads SPAMPVPGPM…QPQEKAPDPY (1011 aa). A compositionally biased stretch (low complexity) spans 22 to 49; sequence PGASGPQGFTGPPGEPGEAGSAGAMGPR. Residues 58–72 show a composition bias toward basic and acidic residues; it reads NGEDGESGKPGRGGE. Over residues 127 to 145 the composition is skewed to low complexity; it reads TGAAGAAGARGNDGAAGAA. The segment covering 147–160 has biased composition (pro residues); the sequence is PPGPTGPAGPPGFP. The span at 161–179 shows a compositional bias: gly residues; the sequence is GGPGAKGDAGAQGGRGPEG. Low complexity-rich tracts occupy residues 180–223, 232–270, and 288–297; these read PAGA…AGAP, SGPQGAAGAPGPKGNTGEVGAPGAKGEAGAKGEAGAPGV, and EPGAAGARGA. Residues 299-311 are compositionally biased toward gly residues; the sequence is GERGGPGGRGFPG. Composition is skewed to low complexity over residues 385-400, 477-489, 498-544, and 577-592; these read VGARGQPGVMGFPGPK, LPGEAGATGPAGA, ERGA…QGMP, and RGLTGPLGLPGPAGAT. Over residues 602–611 the composition is skewed to gly residues; it reads GPVGPGGARG. Composition is skewed to low complexity over residues 625-661 and 675-697; these read AGFAGPPGADGQPGAKGEAGDNGAKGDAGPPGAAGPT and PKGARGAAGPPGATGFPGAAGRV. Pro residues predominate over residues 699–712; sequence PPGPSGNPGPPGPA. Low complexity predominate over residues 804–822; it reads PGLAGAPGEPGREGSPGNE. The span at 848–858 shows a compositional bias: pro residues; it reads APGPPGAPGPV. Residues 872–893 show a composition bias toward low complexity; the sequence is PAGPAGSAGPAGPRGPAGALGL. Basic and acidic residues predominate over residues 894 to 908; the sequence is RGDKGESGEAGERGM. Residues 924–960 are compositionally biased toward low complexity; the sequence is AGSSGEQGPAGAAGPAGPRGPAGSAGSPGKDGMSGLP. Positions 976–988 are enriched in pro residues; the sequence is AGPPGPPGPPGAP. The Fibrillar collagen NC1 domain maps to 1062-1095; it reads TGTWGKLPLLDLAPMDVGAPDQEFGLEVGPVCFL.

Belongs to the fibrillar collagen family.

The protein localises to the secreted. The protein resides in the extracellular space. It localises to the extracellular matrix. This is Collagen, type I, alpha 1a from Epinephelus caninus (Dogtooth grouper).